The primary structure comprises 342 residues: ATPase asna-1 (342 aa).

26–33 (KGGVGKTT) contacts ATP. Asp55 is an active-site residue. 2 residues coordinate ATP: Glu243 and Asn270. Zn(2+)-binding residues include Cys285 and Cys288.

It belongs to the arsA ATPase family. As to quaternary structure, homodimer.

It localises to the cytoplasm. The protein resides in the endoplasmic reticulum. Functionally, ATPase required for the post-translational delivery of tail-anchored (TA) proteins to the endoplasmic reticulum. Recognizes and selectively binds the transmembrane domain of TA proteins in the cytosol. This complex then targets to the endoplasmic reticulum by membrane-bound receptors, where the tail-anchored protein is released for insertion. This process is regulated by ATP binding and hydrolysis. ATP binding drives the homodimer towards the closed dimer state, facilitating recognition of newly synthesized TA membrane proteins. ATP hydrolysis is required for insertion. Subsequently, the homodimer reverts towards the open dimer state, lowering its affinity for the membrane-bound receptor, and returning it to the cytosol to initiate a new round of targeting. May be involved in insulin signaling. The sequence is that of ATPase asna-1 from Caenorhabditis elegans.